Here is a 361-residue protein sequence, read N- to C-terminus: Chorismate synthase (361 aa).

R48 lines the NADP(+) pocket. Residues 125 to 127, 238 to 239, G278, 293 to 297, and R319 each bind FMN; these read RSS, NA, and KPTSS.

It belongs to the chorismate synthase family. As to quaternary structure, homotetramer. FMNH2 serves as cofactor.

The catalysed reaction is 5-O-(1-carboxyvinyl)-3-phosphoshikimate = chorismate + phosphate. It participates in metabolic intermediate biosynthesis; chorismate biosynthesis; chorismate from D-erythrose 4-phosphate and phosphoenolpyruvate: step 7/7. Its function is as follows. Catalyzes the anti-1,4-elimination of the C-3 phosphate and the C-6 proR hydrogen from 5-enolpyruvylshikimate-3-phosphate (EPSP) to yield chorismate, which is the branch point compound that serves as the starting substrate for the three terminal pathways of aromatic amino acid biosynthesis. This reaction introduces a second double bond into the aromatic ring system. The chain is Chorismate synthase from Aliivibrio fischeri (strain MJ11) (Vibrio fischeri).